Consider the following 431-residue polypeptide: Peptidase B (431 aa).

The Mn(2+) site is built by lysine 196 and aspartate 201. Lysine 208 is a catalytic residue. Aspartate 219, aspartate 278, and glutamate 280 together coordinate Mn(2+). Residue arginine 282 is part of the active site.

It belongs to the peptidase M17 family. As to quaternary structure, homohexamer. Mn(2+) is required as a cofactor.

It localises to the cytoplasm. It carries out the reaction Release of an N-terminal amino acid, Xaa, from a peptide or arylamide. Xaa is preferably Glu or Asp but may be other amino acids, including Leu, Met, His, Cys and Gln.. Probably plays an important role in intracellular peptide degradation. The chain is Peptidase B from Vibrio atlanticus (strain LGP32) (Vibrio splendidus (strain Mel32)).